The sequence spans 292 residues: Ribosomal RNA small subunit methyltransferase A (292 aa).

Residues Asn-28, Leu-30, Gly-55, Glu-76, Asp-101, and Asn-126 each coordinate S-adenosyl-L-methionine.

Belongs to the class I-like SAM-binding methyltransferase superfamily. rRNA adenine N(6)-methyltransferase family. RsmA subfamily.

The protein localises to the cytoplasm. It carries out the reaction adenosine(1518)/adenosine(1519) in 16S rRNA + 4 S-adenosyl-L-methionine = N(6)-dimethyladenosine(1518)/N(6)-dimethyladenosine(1519) in 16S rRNA + 4 S-adenosyl-L-homocysteine + 4 H(+). Functionally, specifically dimethylates two adjacent adenosines (A1518 and A1519) in the loop of a conserved hairpin near the 3'-end of 16S rRNA in the 30S particle. May play a critical role in biogenesis of 30S subunits. In Bacillus cytotoxicus (strain DSM 22905 / CIP 110041 / 391-98 / NVH 391-98), this protein is Ribosomal RNA small subunit methyltransferase A.